A 185-amino-acid chain; its full sequence is Elongation factor P (185 aa).

Belongs to the elongation factor P family.

The protein resides in the cytoplasm. Its pathway is protein biosynthesis; polypeptide chain elongation. Functionally, involved in peptide bond synthesis. Stimulates efficient translation and peptide-bond synthesis on native or reconstituted 70S ribosomes in vitro. Probably functions indirectly by altering the affinity of the ribosome for aminoacyl-tRNA, thus increasing their reactivity as acceptors for peptidyl transferase. In Geobacillus thermodenitrificans (strain NG80-2), this protein is Elongation factor P.